The sequence spans 150 residues: 3-dehydroquinate dehydratase (150 aa).

The Proton acceptor role is filled by Y26. The substrate site is built by N77, H83, and D90. The active-site Proton donor is the H103. Substrate-binding positions include 104–105 (LS) and R114.

The protein belongs to the type-II 3-dehydroquinase family. In terms of assembly, homododecamer.

The enzyme catalyses 3-dehydroquinate = 3-dehydroshikimate + H2O. It participates in metabolic intermediate biosynthesis; chorismate biosynthesis; chorismate from D-erythrose 4-phosphate and phosphoenolpyruvate: step 3/7. Functionally, catalyzes a trans-dehydration via an enolate intermediate. This chain is 3-dehydroquinate dehydratase, found in Yersinia enterocolitica serotype O:8 / biotype 1B (strain NCTC 13174 / 8081).